A 190-amino-acid polypeptide reads, in one-letter code: Shikimate kinase (190 aa).

Residue 19–24 coordinates ATP; the sequence is GSGKTT. Position 23 (T23) interacts with Mg(2+). Positions 41, 65, and 87 each coordinate substrate. Residue R124 coordinates ATP. R143 contributes to the substrate binding site.

The protein belongs to the shikimate kinase family. As to quaternary structure, monomer. Mg(2+) is required as a cofactor.

The protein localises to the cytoplasm. The enzyme catalyses shikimate + ATP = 3-phosphoshikimate + ADP + H(+). The protein operates within metabolic intermediate biosynthesis; chorismate biosynthesis; chorismate from D-erythrose 4-phosphate and phosphoenolpyruvate: step 5/7. In terms of biological role, catalyzes the specific phosphorylation of the 3-hydroxyl group of shikimic acid using ATP as a cosubstrate. The protein is Shikimate kinase of Synechococcus sp. (strain ATCC 27144 / PCC 6301 / SAUG 1402/1) (Anacystis nidulans).